Here is a 91-residue protein sequence, read N- to C-terminus: Small ribosomal subunit protein uS15c (91 aa).

It belongs to the universal ribosomal protein uS15 family. In terms of assembly, part of the 30S ribosomal subunit.

It is found in the plastid. Its subcellular location is the chloroplast. The polypeptide is Small ribosomal subunit protein uS15c (rps15) (Ceratophyllum demersum (Rigid hornwort)).